A 261-amino-acid polypeptide reads, in one-letter code: Class II histocompatibility antigen, M alpha chain (261 aa).

The N-terminal stretch at 1-26 is a signal peptide; the sequence is MEHEQKSGAVLLRLLRLLWLLPHSWA. The segment at 27 to 124 is alpha-1; the sequence is VLEASTPVLW…KLEGQIPVSR (98 aa). Over 27–231 the chain is Lumenal; the sequence is VLEASTPVLW…ALPSDLLENA (205 aa). N-linked (GlcNAc...) asparagine glycosylation occurs at asparagine 41. Intrachain disulfides connect cysteine 50/cysteine 105 and cysteine 147/cysteine 202. The 102-residue stretch at 114–215 folds into the Ig-like C1-type domain; the sequence is PKLEGQIPVS…HEIDRYTAIA (102 aa). The interval 125–217 is alpha-2; it reads GLSVAEVFTL…IDRYTAIAYW (93 aa). Residues 218–231 form a connecting peptide region; it reads VPQNALPSDLLENA. The helical transmembrane segment at 232 to 252 threads the bilayer; the sequence is LCGVAFALGVLGTIIGIVFFL. Topologically, residues 253–261 are cytoplasmic; it reads CSQRPCSGD.

The protein belongs to the MHC class II family. As to quaternary structure, heterodimer of an alpha chain (DMA) and a beta chain (DMB). Interacts with MHCII; this interaction mediates rapid selection of high-affinity peptides.

It is found in the late endosome membrane. The protein localises to the lysosome membrane. In terms of biological role, plays a critical role in catalyzing the release of class II-associated invariant chain peptide (CLIP) from newly synthesized MHC class II molecules and freeing the peptide binding site for acquisition of antigenic peptides. This is Class II histocompatibility antigen, M alpha chain (H2-DMa) from Mus musculus (Mouse).